The following is a 951-amino-acid chain: Coiled-coil domain-containing protein 15 (951 aa).

4 coiled-coil regions span residues 64-89 (LIEEELKEQLRKKQEALKHFQKQVKY), 154-193 (DGIEDEENQNELFQQQAQALSETMKQARHRLASFKTVIKK), 782-813 (MDIEREQVKEQQRQKEQKKKIEKIKKKREQEC), and 839-874 (LAQLQLQEIKGTREKQQREKEYLRYVEALRAQIQEK).

Interacts with POC5, POC1B, CETN2 and FAM161A.

It is found in the cytoplasm. Its subcellular location is the cytoskeleton. It localises to the microtubule organizing center. The protein resides in the centrosome. The protein localises to the centriole. It is found in the centriolar satellite. In terms of biological role, plays an important role in primary cilium assembly, maintenance, and length regulation. Interacts with centriole inner scaffold proteins to promote proper centriole size and integrity and assembly of functional cilia. Required for the recruitment of both the inner scaffold protein POC1B and the distal SFI1/CETN2 complex to centrioles. This is Coiled-coil domain-containing protein 15 (CCDC15) from Homo sapiens (Human).